The sequence spans 188 residues: MKANDIKKGNVVEYNNGVYQIRDIERSSPQGRGGNVRFRFIMYSVPGGNKLDASFDADDNLVEVELLRRQSTYSYKDGDAFVFLDDEDYTPYTLDADVIGDDAGYITDGLTGIYVQVIDEQPVAIQLPASVVLEVIETPPELKGGTATKRPKPAKLNTGIEIMVPEYIVNGERVLVNTATGEFAGRAD.

Belongs to the elongation factor P family.

This Stenotrophomonas maltophilia (strain K279a) protein is Elongation factor P-like protein.